A 492-amino-acid chain; its full sequence is Glutamate--cysteine ligase A, chloroplastic (492 aa).

A disulfide bond links cysteine 156 and cysteine 376.

It belongs to the carboxylate-amine ligase family. Glutamate--cysteine ligase type 2 subfamily. As to quaternary structure, homodimer or monomer when oxidized or reduced, respectively. The Cys-156-Cys-376 disulfide bridge is known to modulate the enzyme activity according to the redox status. The oxidized form constitutes the active enzyme.

It is found in the plastid. The protein resides in the chloroplast. It catalyses the reaction L-cysteine + L-glutamate + ATP = gamma-L-glutamyl-L-cysteine + ADP + phosphate + H(+). Its pathway is sulfur metabolism; glutathione biosynthesis; glutathione from L-cysteine and L-glutamate: step 1/2. The chain is Glutamate--cysteine ligase A, chloroplastic (GSH1-1) from Oryza sativa subsp. japonica (Rice).